We begin with the raw amino-acid sequence, 859 residues long: MSAYIAMKGVITNVDENIRNDEDVAFEYEIQKTPQNILTWKRYIEYWKEEGRTDKQIRWLYERFCSQFVTDTSIWEDYIRWESTKEVVETSRIFWLFQRCLKSCVRDCDRICLSYLELAIEQYDLAMIRHALASSLMKMEREMHRKVWDPVIKFVEEKVLPLTQLDSTQEDEEESTDEAELINVLLVKGFTKGGFISEEISENGSRGDIWSSHILERYLKVAPQQKRNESLATLALTRDNITIKSVYEKYLPQDENSGKYLPSSELPFELNFNYLASLEKLGLDNQYEEFMRQMNGIYPDKWLFLILSLAKYYISRGRLDSCGDLLKKSLQQTLRYSDFDRIYNFYLLFEQECSQFILGKLKENDSKFFNQKDWTEKLQAHMATFESLINLYDIYLNDVALRQDSNLVETWMKRVSLQKSAAEKCNVYSEAILKIDPRKVGTPGSFGRLWCSYGDLYWRSNAISTARELWTQSLKVPYPYIEDLEEIYLNWADRELDKEGVERAFSILEDALHVPTNPEILLEKYKNGHRKIPAQTVLFNSLRIWSKYIDYLEAYCPKDANSSDKIFNKTKMAYNTVIDLRLITPAMAENFALFLQNHYEVMESFQVYEKTIPLFPPEIQYELWIEYLEVATSHQLSSLSPEHIRFLFEKALKNLCSNGIDCKTIFIAYSVFEERISGLISKSIEILRRGAVIGTVSVSTHLESRLQLWRMCISKAESTLGPSVTRELYQECIQILPNSKAVEFVIKFSDFESSIGETIRAREILAYGAKLLPPSRNTELWDSFEIFELKHGDKETYKDMLKMKKVLESNMLIDSASVSHEEGNINFVAAATSHAPNSHTLTQSTSSYSINPDEIELDI.

HAT repeat units follow at residues 17–49, 52–84, 88–108, 123–157, 177–219, 238–271, 427–459, 461–482, 520–554, 599–633, 639–675, 685–718, 720–754, and 756–790; these read NIRNDEDVAFEYEIQKTPQNILTWKRYIEYWKE, RTDKQIRWLYERFCSQFVTDTSIWEDYIRWEST, VETSRIFWLFQRCLKSCVRDC, YDLAMIRHALASSLMKMEREMHRKVWDPVIKFVEE, DEAE…ERYL, RDNITIKSVYEKYLPQDENSGKYLPSSELPFELN, VYSEAILKIDPRKVGTPGSFGRLWCSYGDLYWR, NAISTARELWTQSLKVPYPYIE, ILLEKYKNGHRKIPAQTVLFNSLRIWSKYIDYLEA, YEVMESFQVYEKTIPLFPPEIQYELWIEYLEVATS, LSPEHIRFLFEKALKNLCSNGIDCKTIFIAYSVFEER, EILRRGAVIGTVSVSTHLESRLQLWRMCISKAES, LGPSVTRELYQECIQILPNSKAVEFVIKFSDFESS, and GETIRAREILAYGAKLLPPSRNTELWDSFEIFELK.

This sequence belongs to the crooked-neck family. Belongs to the NTC complex (or PRP19-associated complex), composed of at least CEF1, CLF1, ISY1, NTC20, SNT309, SYF1, SYF2, and PRP19. The NTC complex associates with the spliceosome after the release of the U1 and U4 snRNAs and forms the CWC spliceosome subcomplex (or CEF1-associated complex) reminiscent of a late-stage spliceosome composed also of the U2, U5 and U6 snRNAs and at least BUD13, BUD31, BRR2, CDC40, CUS1, CWC2, CWC15, CWC21, CWC22, CWC23, CWC24, CWC25, CWC27, ECM2, HSH155, IST3, LEA1, MSL1, PRP8, PRP9, PRP11, PRP21, PRP22, PRP45, PRP46, SLU7, SMB1, SMD1, SMD2, SMD3, SMX2, SMX3, SNU114, SPP2, RSE1 and YJU2. Interacts with CEF1, CLF1, ISY1, NTC20, PRP22, PRP46 and SYF2.

The protein resides in the nucleus. Involved in pre-mRNA splicing and cell cycle control. As a component of the NTC complex (or PRP19-associated complex), associates to the spliceosome to mediate conformational rearrangement or to stabilize the structure of the spliceosome after U4 snRNA dissociation, which leads to spliceosome maturation. In Saccharomyces cerevisiae (strain ATCC 204508 / S288c) (Baker's yeast), this protein is Pre-mRNA-splicing factor SYF1 (SYF1).